Reading from the N-terminus, the 372-residue chain is Protein-glutamate methylesterase/protein-glutamine glutaminase (372 aa).

The 119-residue stretch at R5–T123 folds into the Response regulatory domain. D56 carries the 4-aspartylphosphate modification. A compositionally biased stretch (polar residues) spans G140–S151. A disordered region spans residues G140–R177. Basic and acidic residues predominate over residues P167–R177. The CheB-type methylesterase domain maps to E178–I364. Residues S190, H217, and D313 contribute to the active site.

This sequence belongs to the CheB family. Post-translationally, phosphorylated by CheA. Phosphorylation of the N-terminal regulatory domain activates the methylesterase activity.

The protein resides in the cytoplasm. It catalyses the reaction [protein]-L-glutamate 5-O-methyl ester + H2O = L-glutamyl-[protein] + methanol + H(+). It carries out the reaction L-glutaminyl-[protein] + H2O = L-glutamyl-[protein] + NH4(+). Involved in chemotaxis. Part of a chemotaxis signal transduction system that modulates chemotaxis in response to various stimuli. Catalyzes the demethylation of specific methylglutamate residues introduced into the chemoreceptors (methyl-accepting chemotaxis proteins or MCP) by CheR. Also mediates the irreversible deamidation of specific glutamine residues to glutamic acid. This chain is Protein-glutamate methylesterase/protein-glutamine glutaminase, found in Treponema denticola (strain ATCC 35405 / DSM 14222 / CIP 103919 / JCM 8153 / KCTC 15104).